The sequence spans 203 residues: Acireductone dioxygenase 3 (203 aa).

Fe(2+) contacts are provided by H96, H98, E102, and H141. 4 residues coordinate Ni(2+): H96, H98, E102, and H141.

It belongs to the acireductone dioxygenase (ARD) family. Fe(2+) serves as cofactor. The cofactor is Ni(2+).

It is found in the cytoplasm. The protein resides in the nucleus. It carries out the reaction 1,2-dihydroxy-5-(methylsulfanyl)pent-1-en-3-one + O2 = 4-methylsulfanyl-2-oxobutanoate + formate + 2 H(+). The catalysed reaction is 1,2-dihydroxy-5-(methylsulfanyl)pent-1-en-3-one + O2 = 3-(methylsulfanyl)propanoate + CO + formate + 2 H(+). The protein operates within amino-acid biosynthesis; L-methionine biosynthesis via salvage pathway; L-methionine from S-methyl-5-thio-alpha-D-ribose 1-phosphate: step 5/6. Functionally, catalyzes 2 different reactions between oxygen and the acireductone 1,2-dihydroxy-3-keto-5-methylthiopentene (DHK-MTPene) depending upon the metal bound in the active site. Fe-containing acireductone dioxygenase (Fe-ARD) produces formate and 2-keto-4-methylthiobutyrate (KMTB), the alpha-ketoacid precursor of methionine in the methionine recycle pathway. Ni-containing acireductone dioxygenase (Ni-ARD) produces methylthiopropionate, carbon monoxide and formate, and does not lie on the methionine recycle pathway. The sequence is that of Acireductone dioxygenase 3 from Physcomitrium patens (Spreading-leaved earth moss).